A 314-amino-acid polypeptide reads, in one-letter code: Probable phytol kinase 1, chloroplastic (314 aa).

The transit peptide at 1-62 (MAAAARPVDV…GVGAAAAPAV (62 aa)) directs the protein to the chloroplast. The next 7 membrane-spanning stretches (helical) occupy residues 72 to 91 (AALRDCAATLLITAGAYSLV), 111 to 131 (IVHVLSGVLFMSSWPLFSNST), 135 to 155 (FFAAIVPLLNCIRLLTYGLRL), 181 to 201 (YVIVLLVSVLVFWRQSPIGIV), 234 to 254 (IGSISMFISGFLLSALMLFYF), 266 to 286 (LALGKLALVALAATVVECIPV), and 294 to 314 (ISVPLATMLAAYLLFGYSSCC).

This sequence belongs to the polyprenol kinase family.

Its subcellular location is the plastid. The protein resides in the chloroplast membrane. It carries out the reaction phytol + CTP = phytyl phosphate + CDP + H(+). It participates in cofactor biosynthesis; tocopherol biosynthesis. Functionally, involved in the activation and reutilization of phytol from chlorophyll degradation in plant metabolism, including tocopherol biosynthesis. Catalyzes the conversion of phytol to phytol monophosphate (PMP). This chain is Probable phytol kinase 1, chloroplastic, found in Oryza sativa subsp. japonica (Rice).